A 799-amino-acid polypeptide reads, in one-letter code: Oligopeptide transporter 1 (799 aa).

Disordered stretches follow at residues 1-26 (MSTI…PIQI) and 43-64 (DVNN…QKFD). The Extracellular segment spans residues 1-108 (MSTIYRESDS…DPTIRLNHWR (108 aa)). Positions 13–26 (SEPSPTPTTIPIQI) are enriched in low complexity. Residue N46 is glycosylated (N-linked (GlcNAc...) asparagine). Phosphothreonine is present on residues T48, T50, and T51. The chain crosses the membrane as a helical span at residues 109–129 (TWFLTTVFVVVFAGVNQFFSL). Topologically, residues 130–135 (RYPSLE) are cytoplasmic. The helical transmembrane segment at 136-156 (INFLVAQVVCYPIGRILALLP) threads the bilayer. Over 157–177 (DWKCSKVPFFDLNPGPFTKKE) the chain is Extracellular. Residues 178–198 (HAVVTIAVALTSSTAYAMYIL) traverse the membrane as a helical segment. Residues 199 to 210 (NAQGSFYNMKLN) are Cytoplasmic-facing. Residues 211–231 (VGYQFLLVWTSQMIGYGAAGL) traverse the membrane as a helical segment. At 232–276 (TRRWVVNPASSIWPQTLISVSLFDSLHSRKVEKTVANGWTMPRYR) the chain is on the extracellular side. Residues 277 to 297 (FFLIVLIGSFIWYWVPGFLFT) traverse the membrane as a helical segment. The Cytoplasmic segment spans residues 298–313 (GLSYFNVILWGSKTRH). Residues 314–334 (NFIANTIFGTQSGLGALPITF) form a helical membrane-spanning segment. Over 335-359 (DYTQVSQAMSGSVFATPFYVSANTY) the chain is Extracellular. Residues 360 to 380 (ASVLIFFVIVLPCLYFTNTWY) traverse the membrane as a helical segment. The Cytoplasmic segment spans residues 381 to 428 (AKYMPVISGSTYDNTQNKYNVTKILNEDYSINLEKYKEYSPVFVPFSY). A helical membrane pass occupies residues 429 to 449 (LLSYALNFAAVIAVFVHCILY). Over 450-482 (HGKDIVAKFKDRKNGGTDIHMRIYSKNYKDCPD) the chain is Extracellular. Residues 483-503 (WWYLLLQIVMIGLGFVAVCCF) traverse the membrane as a helical segment. Residues 504–508 (DTKFP) lie on the Cytoplasmic side of the membrane. A helical membrane pass occupies residues 509–529 (AWAFVIAILISLVNFIPQGIL). At 530 to 540 (EAMTNQHVGLN) the chain is on the extracellular side. A helical transmembrane segment spans residues 541-561 (IITELICGYMLPLRPMANLLF). Over 562-590 (KLYGFIVMRQGLNLSRDLKLAMYMKVSPR) the chain is Cytoplasmic. A helical membrane pass occupies residues 591 to 611 (LIFAVQIYATIISGMVNVGVQ). Residues 612–659 (EWMMHNIDGLCTTDQPNGFTCANGRTVFNASIIWSLPKYLFSSGRIYN) are Extracellular-facing. Residue N640 is glycosylated (N-linked (GlcNAc...) asparagine). The helical transmembrane segment at 660 to 680 (PLMWFFLIGLLFPLAVYAVQW) threads the bilayer. The Cytoplasmic segment spans residues 681–736 (KFPKFKFAKHIHTPVFFTGPGNIPPSTPYNYSLFFAMSFCLNLIRKRWRAWFNKYN). A helical transmembrane segment spans residues 737-757 (FVMGAGVEAGVAISVVIIFLC). Residues 758 to 799 (VQYPGGKLSWWGNNVWKRTYDNDYKKFYTLKKGETFGYDKWW) are Extracellular-facing.

Belongs to the oligopeptide OPT transporter family.

It is found in the cell membrane. In terms of biological role, high affinity transporter for glutathione. Also transports tetra- and pentapeptides like the opioids leucine enkephalin (Tyr-Gly-Gly-Phe-Leu) and methionine enkephalin (Tyr-Gly-Gly_Phe-Met) across the cell membrane. The sequence is that of Oligopeptide transporter 1 (OPT1) from Saccharomyces cerevisiae (strain ATCC 204508 / S288c) (Baker's yeast).